Here is a 373-residue protein sequence, read N- to C-terminus: Protein U3 (373 aa).

This sequence belongs to the herpesviridae US22 family.

The sequence is that of Protein U3 (U3) from Human herpesvirus 6A (strain Uganda-1102) (HHV-6 variant A).